A 334-amino-acid chain; its full sequence is Dihydroorotate dehydrogenase (quinone) (334 aa).

Residues 59–63 and Thr83 each bind FMN; that span reads AGLDK. Position 63 (Lys63) interacts with substrate. 108-112 provides a ligand contact to substrate; it reads NRMGF. Residues Asn136 and Asn169 each coordinate FMN. Asn169 is a binding site for substrate. Ser172 (nucleophile) is an active-site residue. Position 174 (Asn174) interacts with substrate. Positions 214 and 242 each coordinate FMN. 243–244 lines the substrate pocket; the sequence is NT. FMN contacts are provided by residues Gly265, Gly294, and 315 to 316; that span reads YS.

It belongs to the dihydroorotate dehydrogenase family. Type 2 subfamily. Monomer. FMN serves as cofactor.

The protein resides in the cell membrane. It catalyses the reaction (S)-dihydroorotate + a quinone = orotate + a quinol. The protein operates within pyrimidine metabolism; UMP biosynthesis via de novo pathway; orotate from (S)-dihydroorotate (quinone route): step 1/1. Functionally, catalyzes the conversion of dihydroorotate to orotate with quinone as electron acceptor. The sequence is that of Dihydroorotate dehydrogenase (quinone) from Acinetobacter baylyi (strain ATCC 33305 / BD413 / ADP1).